The following is a 148-amino-acid chain: UPF0756 membrane protein CKO_01811 (148 aa).

Helical transmembrane passes span 14 to 34 (ALGFISHNTTVAVSILVLIIV), 51 to 71 (LTVGIIILTIGVMAPIASGSL), 86 to 106 (LVAIAIGVFVSWLGGRGVTLM), and 121 to 141 (VLGVALFRGVPVGPLIAAGLV).

It belongs to the UPF0756 family.

It is found in the cell membrane. This is UPF0756 membrane protein CKO_01811 from Citrobacter koseri (strain ATCC BAA-895 / CDC 4225-83 / SGSC4696).